We begin with the raw amino-acid sequence, 508 residues long: Maturase K (508 aa).

The protein belongs to the intron maturase 2 family. MatK subfamily.

Its subcellular location is the plastid. The protein resides in the chloroplast. Its function is as follows. Usually encoded in the trnK tRNA gene intron. Probably assists in splicing its own and other chloroplast group II introns. This Lupinus cosentinii (West Australian blue lupine) protein is Maturase K.